The chain runs to 61 residues: Alpha-conotoxin PnIB (61 aa).

The first 21 residues, 1 to 21 (MGMRMMFTVFLLVVLATTVVS), serve as a signal peptide directing secretion. Positions 22–44 (FTSDRASDDGNAAASDLIALTIK) are excised as a propeptide. Intrachain disulfides connect C46/C52 and C47/C60. Residues 48 to 50 (SLP) form a ser-Xaa-Pro motif, crucial for potent interaction with nAChR region. Y59 carries the sulfotyrosine modification. C60 is subject to Cysteine amide.

It belongs to the conotoxin A superfamily. In terms of tissue distribution, expressed by the venom duct.

It localises to the secreted. Alpha-conotoxins act on postsynaptic membranes, they bind to the nicotinic acetylcholine receptors (nAChR) and thus inhibit them. This toxin blocks mammalian nAChRs (alpha-7/CHRNA7 &gt; alpha-3-beta-2/CHRNA3-CHRNB2). The sequence is that of Alpha-conotoxin PnIB from Conus pennaceus (Feathered cone).